The primary structure comprises 450 residues: TNF receptor-associated factor family protein DDB_G0273433/DDB_G0273509 (450 aa).

An RING-type; degenerate zinc finger spans residues 26–73; it reads CQICFNSVIDFKKETLSFDVLQCRNGHISCHECWNRQLSIKQECPSCK. TRAF-type zinc fingers lie at residues 129–185 and 186–243; these read HHLK…KKLN and KHIE…SQLS. Residues 257–297 adopt a coiled-coil conformation; it reads QNVMDLHKLQLDECNQDYRKLEKQNRDLEKRLFYLESTVNS. An MATH domain is found at 319–439; sequence VYKGKWVINN…NNSLTISISI (121 aa).

Belongs to the TNF receptor-associated factor family. A subfamily.

The protein resides in the cytoplasm. In terms of biological role, probable adapter protein and signal transducer that links members of the tumor necrosis factor receptor family to different signaling pathways by association with the receptor cytoplasmic domain and kinases. In Dictyostelium discoideum (Social amoeba), this protein is TNF receptor-associated factor family protein DDB_G0273433/DDB_G0273509.